The chain runs to 440 residues: Chromosomal replication initiator protein DnaA (440 aa).

The segment at 1-72 (MTELDSLWEA…KEFAQRELGR (72 aa)) is domain I, interacts with DnaA modulators. Residues 72–103 (RNIEPHYVLEGEFTYTNKKTEDDPTPSFEMDT) form a domain II region. Positions 104-320 (PLNPHYNFGT…GALTKVQAFA (217 aa)) are domain III, AAA+ region. Positions 148, 150, 151, and 152 each coordinate ATP. Residues 321–440 (NLSGERITPS…ITKLKAKLRS (120 aa)) form a domain IV, binds dsDNA region.

Belongs to the DnaA family. In terms of assembly, oligomerizes as a right-handed, spiral filament on DNA at oriC.

It localises to the cytoplasm. Plays an essential role in the initiation and regulation of chromosomal replication. ATP-DnaA binds to the origin of replication (oriC) to initiate formation of the DNA replication initiation complex once per cell cycle. Binds the DnaA box (a 9 base pair repeat at the origin) and separates the double-stranded (ds)DNA. Forms a right-handed helical filament on oriC DNA; dsDNA binds to the exterior of the filament while single-stranded (ss)DNA is stabiized in the filament's interior. The ATP-DnaA-oriC complex binds and stabilizes one strand of the AT-rich DNA unwinding element (DUE), permitting loading of DNA polymerase. After initiation quickly degrades to an ADP-DnaA complex that is not apt for DNA replication. Binds acidic phospholipids. The protein is Chromosomal replication initiator protein DnaA of Limosilactobacillus reuteri (strain DSM 20016) (Lactobacillus reuteri).